We begin with the raw amino-acid sequence, 162 residues long: Sec-independent protein translocase protein TatB (162 aa).

A helical transmembrane segment spans residues 1–21; that stretch reads MFDLGWTELLVIGVVALIVVG. 2 disordered regions span residues 69–111 and 124–162; these read ATNP…DRAE and AADR…ETKA. Basic and acidic residues-rich tracts occupy residues 83-111 and 124-141; these read ATRD…DRAE and AADR…KAEE. The segment covering 144–155 has biased composition (low complexity); sequence AALSATPASTAS.

Belongs to the TatB family. As to quaternary structure, the Tat system comprises two distinct complexes: a TatABC complex, containing multiple copies of TatA, TatB and TatC subunits, and a separate TatA complex, containing only TatA subunits. Substrates initially bind to the TatABC complex, which probably triggers association of the separate TatA complex to form the active translocon.

Its subcellular location is the cell inner membrane. In terms of biological role, part of the twin-arginine translocation (Tat) system that transports large folded proteins containing a characteristic twin-arginine motif in their signal peptide across membranes. Together with TatC, TatB is part of a receptor directly interacting with Tat signal peptides. TatB may form an oligomeric binding site that transiently accommodates folded Tat precursor proteins before their translocation. This is Sec-independent protein translocase protein TatB from Ruegeria sp. (strain TM1040) (Silicibacter sp.).